We begin with the raw amino-acid sequence, 445 residues long: Histidinol dehydrogenase (445 aa).

NAD(+)-binding residues include Tyr-138, Gln-199, and Asn-222. Residues Ser-245, Gln-267, and His-270 each coordinate substrate. Residues Gln-267 and His-270 each contribute to the Zn(2+) site. Active-site proton acceptor residues include Glu-335 and His-336. His-336, Asp-369, Glu-423, and His-428 together coordinate substrate. A Zn(2+)-binding site is contributed by Asp-369. His-428 serves as a coordination point for Zn(2+).

Belongs to the histidinol dehydrogenase family. Zn(2+) serves as cofactor.

It carries out the reaction L-histidinol + 2 NAD(+) + H2O = L-histidine + 2 NADH + 3 H(+). Its pathway is amino-acid biosynthesis; L-histidine biosynthesis; L-histidine from 5-phospho-alpha-D-ribose 1-diphosphate: step 9/9. Catalyzes the sequential NAD-dependent oxidations of L-histidinol to L-histidinaldehyde and then to L-histidine. In Burkholderia pseudomallei (strain 1710b), this protein is Histidinol dehydrogenase.